A 101-amino-acid polypeptide reads, in one-letter code: MIPGELFIQDGEIELNAGRKTVTLTVANTGDRPIQVGSHYHFFETNPALKFERKKARGMRLDIAAGTAVRFEPGQTRDVQLVALAGKKTIYGFRGDVMGKL.

It belongs to the urease beta subunit family. In terms of assembly, heterotrimer of UreA (gamma), UreB (beta) and UreC (alpha) subunits. Three heterotrimers associate to form the active enzyme.

It is found in the cytoplasm. The catalysed reaction is urea + 2 H2O + H(+) = hydrogencarbonate + 2 NH4(+). It participates in nitrogen metabolism; urea degradation; CO(2) and NH(3) from urea (urease route): step 1/1. The sequence is that of Urease subunit beta from Bradyrhizobium diazoefficiens (strain JCM 10833 / BCRC 13528 / IAM 13628 / NBRC 14792 / USDA 110).